The chain runs to 182 residues: Keratin, type II cytoskeletal 60 kDa, component III (182 aa).

The IF rod domain maps to 1–63 (ERGELALKDA…KLLEGEECRL (63 aa)). The coil 2 stretch occupies residues 1–63 (ERGELALKDA…KLLEGEECRL (63 aa)). The interval 63–182 (LSGEGVGPVN…TSSSRKSFKS (120 aa)) is tail. A disordered region spans residues 157–182 (FGSGGGSSSSVKFVSTTSSSRKSFKS). Positions 164–182 (SSSVKFVSTTSSSRKSFKS) are enriched in low complexity.

Belongs to the intermediate filament family. As to quaternary structure, heterotetramer of two type I and two type II keratins.

The polypeptide is Keratin, type II cytoskeletal 60 kDa, component III (Bos taurus (Bovine)).